Consider the following 739-residue polypeptide: Phosphoribosylformylglycinamidine synthase subunit PurL (739 aa).

Residue histidine 55 is part of the active site. 2 residues coordinate ATP: tyrosine 58 and lysine 97. Residue glutamate 99 coordinates Mg(2+). Substrate-binding positions include 100–103 (SHNH) and arginine 122. Histidine 101 acts as the Proton acceptor in catalysis. Aspartate 123 serves as a coordination point for Mg(2+). Residue glutamine 246 participates in substrate binding. Position 276 (aspartate 276) interacts with Mg(2+). 320–322 (ESQ) contributes to the substrate binding site. ATP contacts are provided by aspartate 502 and glycine 539. Mg(2+) is bound at residue asparagine 540. Serine 542 provides a ligand contact to substrate.

It belongs to the FGAMS family. Monomer. Part of the FGAM synthase complex composed of 1 PurL, 1 PurQ and 2 PurS subunits.

Its subcellular location is the cytoplasm. It carries out the reaction N(2)-formyl-N(1)-(5-phospho-beta-D-ribosyl)glycinamide + L-glutamine + ATP + H2O = 2-formamido-N(1)-(5-O-phospho-beta-D-ribosyl)acetamidine + L-glutamate + ADP + phosphate + H(+). It participates in purine metabolism; IMP biosynthesis via de novo pathway; 5-amino-1-(5-phospho-D-ribosyl)imidazole from N(2)-formyl-N(1)-(5-phospho-D-ribosyl)glycinamide: step 1/2. Part of the phosphoribosylformylglycinamidine synthase complex involved in the purines biosynthetic pathway. Catalyzes the ATP-dependent conversion of formylglycinamide ribonucleotide (FGAR) and glutamine to yield formylglycinamidine ribonucleotide (FGAM) and glutamate. The FGAM synthase complex is composed of three subunits. PurQ produces an ammonia molecule by converting glutamine to glutamate. PurL transfers the ammonia molecule to FGAR to form FGAM in an ATP-dependent manner. PurS interacts with PurQ and PurL and is thought to assist in the transfer of the ammonia molecule from PurQ to PurL. This chain is Phosphoribosylformylglycinamidine synthase subunit PurL, found in Lactiplantibacillus plantarum (strain ATCC BAA-793 / NCIMB 8826 / WCFS1) (Lactobacillus plantarum).